The following is a 259-amino-acid chain: MQQMVPASGYDRAITIFSPEGRLYQVEYAREAVRRGTTAVGIKCKDGVVLAVDRRITSKLIDVSSIEKIFQIDDHIVAATSGLVADARVLIDRARVEAQVNRISYGEAITVEALAKKICDIKQAYTHHGGARPFGLALLITGIDRHSARLFETDPSGALIEYKATAIGSGRPVAMEILEEKYDENMSVSEGMELAIYALSKTTEELKPENIDMAIVKDTGKLVEKITVFEIEKIVKKVYDKIKVENEEAEKKKATENIE.

It belongs to the peptidase T1A family. In terms of assembly, the 20S proteasome core is composed of 14 alpha and 14 beta subunits that assemble into four stacked heptameric rings, resulting in a barrel-shaped structure. The two inner rings, each composed of seven catalytic beta subunits, are sandwiched by two outer rings, each composed of seven alpha subunits. The catalytic chamber with the active sites is on the inside of the barrel. Has a gated structure, the ends of the cylinder being occluded by the N-termini of the alpha-subunits. Is capped at one or both ends by the proteasome regulatory ATPase, PAN.

It is found in the cytoplasm. Its activity is regulated as follows. The formation of the proteasomal ATPase PAN-20S proteasome complex, via the docking of the C-termini of PAN into the intersubunit pockets in the alpha-rings, triggers opening of the gate for substrate entry. Interconversion between the open-gate and close-gate conformations leads to a dynamic regulation of the 20S proteasome proteolysis activity. In terms of biological role, component of the proteasome core, a large protease complex with broad specificity involved in protein degradation. The sequence is that of Proteasome subunit alpha from Methanococcus vannielii (strain ATCC 35089 / DSM 1224 / JCM 13029 / OCM 148 / SB).